Reading from the N-terminus, the 410-residue chain is Pyruvate dehydrogenase complex protein X component, mitochondrial (410 aa).

A mitochondrion-targeting transit peptide spans 1 to 30 (MLSAISKVSTLKSCTRYLTKCNYHASAKLL). The Lipoyl-binding domain occupies 32-108 (VKTFSMPAMS…DVGEPIAYIA (77 aa)). Position 73 is an N6-lipoyllysine (K73). The 42-residue stretch at 169-210 (TLLPSVSLLLAENNISKQKALKEIAPSGSNGRLLKGDVLAYL) folds into the Peripheral subunit-binding (PSBD) domain.

This sequence belongs to the 2-oxoacid dehydrogenase family. As to quaternary structure, eukaryotic pyruvate dehydrogenase (PDH) complexes are organized as a core consisting of the oligomeric dihydrolipoamide acetyl-transferase (E2), around which are arranged multiple copies of pyruvate dehydrogenase (E1), dihydrolipoamide dehydrogenase (E3) and protein X (E3BP) bound by non-covalent bonds.

It localises to the mitochondrion matrix. Functionally, required for anchoring dihydrolipoamide dehydrogenase (E3) to the dihydrolipoamide transacetylase (E2) core of the pyruvate dehydrogenase complexes of eukaryotes. This specific binding is essential for a functional PDH complex. The protein is Pyruvate dehydrogenase complex protein X component, mitochondrial (PDX1) of Saccharomyces cerevisiae (strain ATCC 204508 / S288c) (Baker's yeast).